A 200-amino-acid chain; its full sequence is Diadenylate cyclase (200 aa).

Residues 5-25 (ILLFITLIFLLLLFVFLIAFA) traverse the membrane as a helical segment. Positions 28–185 (NKRVRNYVVR…KGVIKTLSSN (158 aa)) constitute a DAC domain.

It belongs to the adenylate cyclase family. DacB/CdaS subfamily. Probably oligomerizes.

It localises to the cell membrane. It carries out the reaction 2 ATP = 3',3'-c-di-AMP + 2 diphosphate. Its function is as follows. Catalyzes the condensation of 2 ATP molecules into cyclic di-AMP (c-di-AMP), a second messenger used to regulate differing processes in different bacteria. This is Diadenylate cyclase from Mycoplasma genitalium (strain ATCC 33530 / DSM 19775 / NCTC 10195 / G37) (Mycoplasmoides genitalium).